Reading from the N-terminus, the 234-residue chain is UDP-2,3-diacylglucosamine hydrolase (234 aa).

Mn(2+) contacts are provided by Asp9, His11, Asp42, Asn80, and His115. Residue 80–81 participates in substrate binding; that stretch reads NR. Asp123, Ser161, Lys165, Lys168, and His196 together coordinate substrate. The Mn(2+) site is built by His196 and His198.

Belongs to the LpxH family. It depends on Mn(2+) as a cofactor.

The protein resides in the cell inner membrane. The catalysed reaction is UDP-2-N,3-O-bis[(3R)-3-hydroxytetradecanoyl]-alpha-D-glucosamine + H2O = 2-N,3-O-bis[(3R)-3-hydroxytetradecanoyl]-alpha-D-glucosaminyl 1-phosphate + UMP + 2 H(+). Its pathway is glycolipid biosynthesis; lipid IV(A) biosynthesis; lipid IV(A) from (3R)-3-hydroxytetradecanoyl-[acyl-carrier-protein] and UDP-N-acetyl-alpha-D-glucosamine: step 4/6. Its function is as follows. Hydrolyzes the pyrophosphate bond of UDP-2,3-diacylglucosamine to yield 2,3-diacylglucosamine 1-phosphate (lipid X) and UMP by catalyzing the attack of water at the alpha-P atom. Involved in the biosynthesis of lipid A, a phosphorylated glycolipid that anchors the lipopolysaccharide to the outer membrane of the cell. The protein is UDP-2,3-diacylglucosamine hydrolase of Histophilus somni (strain 129Pt) (Haemophilus somnus).